The sequence spans 508 residues: Amphoterin-induced protein 3 (508 aa).

The N-terminal stretch at 1-19 (MAWLVLLGLLLCMLGAGSG) is a signal peptide. Residues 20 to 383 (TSDLEGVLPP…PRPEPEAFNT (364 aa)) lie on the Extracellular side of the membrane. One can recognise an LRRNT domain in the interval 25–61 (GVLPPDPHNCPNKCVCAADVLSCAGRGLQDLPAALPA). Intrachain disulfides connect Cys34–Cys40 and Cys38–Cys47. LRR repeat units follow at residues 62-83 (TAAELDLSHNALKRLHPGWLAP), 86-107 (RLRALYLGYNKLDVLGRGVFTN), 110-131 (GLRILDLSSNLLRRLRTYDLDG), 134-155 (ELEKLLLFNNRLMHLDLDAFQG), 158-178 (MLSHLYLSCNELSSFSFNHLH), and 184-207 (RLRTLDLSSNWLGHVSVPELAALP). Asn107 is a glycosylation site (N-linked (GlcNAc...) asparagine). Residues 219-275 (NPLPCDCSLYHLLRRWHQRGLSALHDFEREYTCLAFKVAESRVRFFEHSRVFKNCSV) enclose the LRRCT domain. 3 cysteine pairs are disulfide-bonded: Cys223/Cys251, Cys225/Cys273, and Cys300/Cys352. N-linked (GlcNAc...) asparagine glycans are attached at residues Asn272, Asn301, Asn362, and Asn368. Residues 279-370 (PGLELPEEEL…HNQTLEYNVS (92 aa)) form the Ig-like C2-type domain. Residues 384-404 (GFTTLLGCIVGLVLVLLYLFA) traverse the membrane as a helical segment. Residues 405 to 508 (PPCRGCCRCC…STGSEGLMMS (104 aa)) lie on the Cytoplasmic side of the membrane.

The protein belongs to the immunoglobulin superfamily. AMIGO family. As to quaternary structure, binds AMIGO1 or AMIGO2.

Its subcellular location is the membrane. Functionally, may mediate heterophilic cell-cell interaction. May contribute to signal transduction through its intracellular domain. In Rattus norvegicus (Rat), this protein is Amphoterin-induced protein 3.